We begin with the raw amino-acid sequence, 528 residues long: Phosphoenolpyruvate carboxykinase (ATP) (528 aa).

The substrate site is built by arginine 56, tyrosine 192, and lysine 198. ATP-binding positions include lysine 198, histidine 217, and glycine 233–threonine 241. Mn(2+)-binding residues include lysine 198 and histidine 217. Aspartate 254 serves as a coordination point for Mn(2+). ATP contacts are provided by glutamate 282, arginine 319, and threonine 444. Arginine 319 is a substrate binding site.

This sequence belongs to the phosphoenolpyruvate carboxykinase (ATP) family. Requires Mn(2+) as cofactor.

It localises to the cytoplasm. The catalysed reaction is oxaloacetate + ATP = phosphoenolpyruvate + ADP + CO2. It participates in carbohydrate biosynthesis; gluconeogenesis. In terms of biological role, involved in the gluconeogenesis. Catalyzes the conversion of oxaloacetate (OAA) to phosphoenolpyruvate (PEP) through direct phosphoryl transfer between the nucleoside triphosphate and OAA. This is Phosphoenolpyruvate carboxykinase (ATP) from Bacillus cereus (strain G9842).